The chain runs to 981 residues: Anoctamin-3 (981 aa).

Polar residues predominate over residues 1–22 (MVHHSGSIQSFKQQKGMNISKS). The disordered stretch occupies residues 1 to 33 (MVHHSGSIQSFKQQKGMNISKSEITKETSLKPS). Residues 1–403 (MVHHSGSIQS…LYFAWLGWYT (403 aa)) lie on the Cytoplasmic side of the membrane. A helical transmembrane segment spans residues 404 to 424 (GMLIPAAIVGLCVFFYGLFTM). Residues Asn425, Asn448, and Asn455 are each glycosylated (N-linked (GlcNAc...) asparagine). The Extracellular portion of the chain corresponds to 425–469 (NNSQVSQEICKATEVFMCPLCDKNCSLQRLNDSCIYAKVTYLFDN). Residues 470 to 490 (GGTVFFAIFMAIWATVFLEFW) traverse the membrane as a helical segment. The Cytoplasmic segment spans residues 491–550 (KRRRSILTYTWDLIEWEEEEETLRPQFEAKYYKMEIVNPITGKPEPHQPSSDKVTRLLVS). A helical membrane pass occupies residues 551–571 (VSGIFFMISLVITAVFGVVVY). Residues 572–592 (RLVVMEQFASFKWNFIKQYWQ) are Extracellular-facing. A helical membrane pass occupies residues 593 to 613 (FATSAAAVCINFIIIMLLNLA). At 614-640 (YEKIAYLLTNLEYPRTESEWENSFALK) the chain is on the cytoplasmic side. The chain crosses the membrane as a helical span at residues 641 to 661 (MFLFQFVNLNSSIFYIAFFLG). The Extracellular segment spans residues 662–761 (RFVGHPGKYN…MDEYLEMVLQ (100 aa)). A helical membrane pass occupies residues 762–782 (FGFTTIFVAAFPLAPLLALLN). At 783-810 (NIIEIRLDAYKFVTQWRRPLPARATDIG) the chain is on the cytoplasmic side. The chain crosses the membrane as a helical span at residues 811 to 831 (IWLGILEGIGILAVITNAFVI). Over 832–914 (AITSDYIPRF…QYWHILAARL (83 aa)) the chain is Extracellular. An N-linked (GlcNAc...) asparagine glycan is attached at Asn866. The helical transmembrane segment at 915-935 (AFIIVFEHLVFGIKSFIAYLI) threads the bilayer. Over 936-981 (PDVPKGLHDRIRREKYLVQEMMYEAELEHLQQQRRKSGQPVHHEWP) the chain is Cytoplasmic.

It belongs to the anoctamin family. In terms of assembly, interacts with KCNT1/Slack. Highly expressed in the forebrain striatum.

The protein localises to the cell membrane. It carries out the reaction a 1,2-diacyl-sn-glycero-3-phosphocholine(in) = a 1,2-diacyl-sn-glycero-3-phosphocholine(out). It catalyses the reaction a beta-D-galactosyl-(1&lt;-&gt;1')-N-acylsphing-4-enine(out) = a beta-D-galactosyl-(1&lt;-&gt;1')-N-acylsphing-4-enine(in). Has calcium-dependent phospholipid scramblase activity; scrambles phosphatidylcholine and galactosylceramide. Seems to act as potassium channel regulator and may inhibit pain signaling; can facilitate KCNT1/Slack channel activity by promoting its full single-channel conductance at very low sodium concentrations and by increasing its sodium sensitivity. Does not exhibit calcium-activated chloride channel (CaCC) activity. This chain is Anoctamin-3 (ANO3), found in Homo sapiens (Human).